Here is a 749-residue protein sequence, read N- to C-terminus: Replication restart protein PriA (749 aa).

In terms of domain architecture, Helicase ATP-binding spans 224 to 391 (SLKTSQFHTH…LSGKYVLSRL (168 aa)). 237 to 244 (GITGSGKT) contributes to the ATP binding site. A DEAH box motif is present at residues 333-336 (DEEH). 8 residues coordinate Zn(2+): Cys454, Cys457, Cys463, Cys466, Cys481, Cys484, Cys495, and Cys498. One can recognise a Helicase C-terminal domain in the interval 490–658 (DLPQSCPKCL…EYPPFIRLIR (169 aa)).

This sequence belongs to the helicase family. PriA subfamily. Component of the replication restart primosome. Zn(2+) is required as a cofactor.

The enzyme catalyses Couples ATP hydrolysis with the unwinding of duplex DNA by translocating in the 3'-5' direction.. The catalysed reaction is ATP + H2O = ADP + phosphate + H(+). Its function is as follows. Initiates the restart of stalled replication forks, which reloads the replicative helicase on sites other than the origin of replication. Recognizes and binds to abandoned replication forks and remodels them to uncover a helicase loading site. Promotes assembly of the primosome at these replication forks. This chain is Replication restart protein PriA, found in Chlamydia pneumoniae (Chlamydophila pneumoniae).